Reading from the N-terminus, the 293-residue chain is MKIRIAARGSKLSRIQVDMLGEKLKKIGIEYEIIDIKTKADLFSTEPLSKLGKGVFEKEVNEAVLEGKADIAVHSMKDILSEINPSLEIFAVLERDPPYDILIAEKNLDKLDSNITIGTSSIRRKNFLKYIKPEINTKDIRGNVDTRIRKYLSKEYQGLILAEASLKRLNMTMNYHRLNVYDFTPEANQGIIVALGRKKDEKIKEIFKEINHKDTLDEALAERAVISLVGGGCHSPIGVLFKKEGKEFYGIASYSDGKKKITVSISKPGDPYTIGSELGLLLKKEMKNEDIIP.

C233 carries the post-translational modification S-(dipyrrolylmethanemethyl)cysteine.

The protein belongs to the HMBS family. It depends on dipyrromethane as a cofactor.

The enzyme catalyses 4 porphobilinogen + H2O = hydroxymethylbilane + 4 NH4(+). It participates in porphyrin-containing compound metabolism; protoporphyrin-IX biosynthesis; coproporphyrinogen-III from 5-aminolevulinate: step 2/4. Tetrapolymerization of the monopyrrole PBG into the hydroxymethylbilane pre-uroporphyrinogen in several discrete steps. The chain is Probable porphobilinogen deaminase from Saccharolobus islandicus (strain L.S.2.15 / Lassen #1) (Sulfolobus islandicus).